The following is a 1793-amino-acid chain: Chitin synthase 5 (1793 aa).

The tract at residues 1-28 (MTNPRMSMYSLASEAPGGNRGTGQQSTQ) is disordered. 5 N-linked (GlcNAc...) asparagine glycosylation sites follow: Asn70, Asn164, Asn638, Asn664, and Asn669. Helical transmembrane passes span 750–770 (VWVFIVWAFTWWIPSPLLRYV) and 786–806 (LVLCFFIFLMNALIVFWIVAF). The 63-residue stretch at 815 to 877 (DKAYSQKEVD…GMNLDDYFVA (63 aa)) folds into the Cytochrome b5 heme-binding domain. N-linked (GlcNAc...) asparagine glycosylation is found at Asn897, Asn1019, and Asn1023. Residues 1056–1076 (LLLAFSIMLCAVILLKFVSAL) form a helical membrane-spanning segment. N-linked (GlcNAc...) asparagine glycosylation is present at Asn1421. A run of 3 helical transmembrane segments spans residues 1452–1472 (LFGTIILPATCVYLGYLIYLV), 1479–1499 (FPLISIIMLAAVYGLQALIFI), and 1507–1527 (IGWMIIYILAFPIYSFVLPIY). 2 N-linked (GlcNAc...) asparagine glycosylation sites follow: Asn1534 and Asn1705. In terms of domain architecture, DEK-C spans 1735 to 1791 (GPDDGMIVEAIRTVLMEVDLDTVTKKQVRALVEQRLQSELVGERRTFMDRQIDHELA).

It belongs to the chitin synthase family. Class V subfamily.

The protein resides in the cell membrane. The catalysed reaction is [(1-&gt;4)-N-acetyl-beta-D-glucosaminyl](n) + UDP-N-acetyl-alpha-D-glucosamine = [(1-&gt;4)-N-acetyl-beta-D-glucosaminyl](n+1) + UDP + H(+). Polymerizes chitin, a structural polymer of the cell wall and septum, by transferring the sugar moiety of UDP-GlcNAc to the non-reducing end of the growing chitin polymer. Regulates Germination and Tolerance to Hyperosmotic Stress. Plays a key role in pathogenicity. Likely contributes to post-penetration virulence. In Verticillium dahliae (strain VdLs.17 / ATCC MYA-4575 / FGSC 10137) (Verticillium wilt), this protein is Chitin synthase 5.